Here is a 145-residue protein sequence, read N- to C-terminus: Actin-depolymerizing factor 11 (145 aa).

The 135-residue stretch at 11–145 (SSGIGVAAEC…DIELLRERAH (135 aa)) folds into the ADF-H domain.

The protein belongs to the actin-binding proteins ADF family.

Actin-depolymerizing protein. Severs actin filaments (F-actin) and binds to actin monomers. The polypeptide is Actin-depolymerizing factor 11 (ADF11) (Oryza sativa subsp. japonica (Rice)).